Here is a 148-residue protein sequence, read N- to C-terminus: Deoxyuridine 5'-triphosphate nucleotidohydrolase (148 aa).

Substrate contacts are provided by residues 67–69, N80, 84–86, and M94; these read RSG and LID.

Belongs to the dUTPase family. It depends on Mg(2+) as a cofactor.

It carries out the reaction dUTP + H2O = dUMP + diphosphate + H(+). It functions in the pathway pyrimidine metabolism; dUMP biosynthesis; dUMP from dCTP (dUTP route): step 2/2. In terms of biological role, this enzyme is involved in nucleotide metabolism: it produces dUMP, the immediate precursor of thymidine nucleotides and it decreases the intracellular concentration of dUTP so that uracil cannot be incorporated into DNA. This chain is Deoxyuridine 5'-triphosphate nucleotidohydrolase, found in Paraburkholderia xenovorans (strain LB400).